The following is a 370-amino-acid chain: Putative glutamate--cysteine ligase 2 (370 aa).

It belongs to the glutamate--cysteine ligase type 2 family. YbdK subfamily.

It carries out the reaction L-cysteine + L-glutamate + ATP = gamma-L-glutamyl-L-cysteine + ADP + phosphate + H(+). ATP-dependent carboxylate-amine ligase which exhibits weak glutamate--cysteine ligase activity. This is Putative glutamate--cysteine ligase 2 from Janthinobacterium sp. (strain Marseille) (Minibacterium massiliensis).